A 264-amino-acid polypeptide reads, in one-letter code: Probable aquaporin TIP3-1 (264 aa).

2 consecutive transmembrane segments (helical) span residues 28–48 (AAIS…GSIL) and 62–82 (GLVA…AVAV). The short motif at 90 to 92 (NPA) is the NPA 1 element. 3 consecutive transmembrane segments (helical) span residues 105-125 (LIRA…ATLL), 149-169 (AVLL…ATVI), and 176-196 (VGTI…LAGG). The short motif at 204–206 (NPA) is the NPA 2 element. Residues 224 to 244 (YWLGPFVGAGLAGLLYEYLVI) form a helical membrane-spanning segment.

The protein belongs to the MIP/aquaporin (TC 1.A.8) family. TIP (TC 1.A.8.10) subfamily. Expressed in leaves and at lower levels in roots.

The protein resides in the vacuole membrane. Functionally, aquaporins facilitate the transport of water and small neutral solutes across cell membranes. May be involved in transport from the vacuolar compartment to the cytoplasm. The polypeptide is Probable aquaporin TIP3-1 (TIP3-1) (Oryza sativa subsp. japonica (Rice)).